A 353-amino-acid chain; its full sequence is Photosystem II protein D1 (353 aa).

Residue threonine 2 is modified to N-acetylthreonine. At threonine 2 the chain carries Phosphothreonine. The next 3 membrane-spanning stretches (helical) occupy residues 29 to 46 (YIGWFGVLMIPTLLTATS), 118 to 133 (HFLLGVACYMGREWEL), and 142 to 156 (WIAVAYSAPVAAATA). Histidine 118 lines the chlorophyll a pocket. Tyrosine 126 contacts pheophytin a. Aspartate 170 and glutamate 189 together coordinate [CaMn4O5] cluster. Residues 197 to 218 (FHMLGVAGVFGGSLFSAMHGSL) traverse the membrane as a helical segment. Histidine 198 contacts chlorophyll a. A quinone contacts are provided by residues histidine 215 and 264–265 (SF). A Fe cation-binding site is contributed by histidine 215. Residue histidine 272 coordinates Fe cation. Residues 274-288 (FLAAWPVVGIWFTAL) traverse the membrane as a helical segment. [CaMn4O5] cluster-binding residues include histidine 332, glutamate 333, aspartate 342, and alanine 344. The propeptide occupies 345–353 (AIEAPSTNG).

Belongs to the reaction center PufL/M/PsbA/D family. As to quaternary structure, PSII is composed of 1 copy each of membrane proteins PsbA, PsbB, PsbC, PsbD, PsbE, PsbF, PsbH, PsbI, PsbJ, PsbK, PsbL, PsbM, PsbT, PsbX, PsbY, PsbZ, Psb30/Ycf12, at least 3 peripheral proteins of the oxygen-evolving complex and a large number of cofactors. It forms dimeric complexes. The D1/D2 heterodimer binds P680, chlorophylls that are the primary electron donor of PSII, and subsequent electron acceptors. It shares a non-heme iron and each subunit binds pheophytin, quinone, additional chlorophylls, carotenoids and lipids. D1 provides most of the ligands for the Mn4-Ca-O5 cluster of the oxygen-evolving complex (OEC). There is also a Cl(-1) ion associated with D1 and D2, which is required for oxygen evolution. The PSII complex binds additional chlorophylls, carotenoids and specific lipids. is required as a cofactor. Tyr-161 forms a radical intermediate that is referred to as redox-active TyrZ, YZ or Y-Z. In terms of processing, C-terminally processed by CTPA; processing is essential to allow assembly of the oxygen-evolving complex and thus photosynthetic growth.

The protein resides in the plastid. Its subcellular location is the chloroplast thylakoid membrane. It carries out the reaction 2 a plastoquinone + 4 hnu + 2 H2O = 2 a plastoquinol + O2. Functionally, photosystem II (PSII) is a light-driven water:plastoquinone oxidoreductase that uses light energy to abstract electrons from H(2)O, generating O(2) and a proton gradient subsequently used for ATP formation. It consists of a core antenna complex that captures photons, and an electron transfer chain that converts photonic excitation into a charge separation. The D1/D2 (PsbA/PsbD) reaction center heterodimer binds P680, the primary electron donor of PSII as well as several subsequent electron acceptors. The protein is Photosystem II protein D1 of Citrus sinensis (Sweet orange).